The following is a 424-amino-acid chain: Imidazolonepropionase (424 aa).

Residues H81 and H83 each coordinate Fe(3+). Positions 81 and 83 each coordinate Zn(2+). Residues R90, Y153, and H186 each contribute to the 4-imidazolone-5-propanoate site. Y153 contributes to the N-formimidoyl-L-glutamate binding site. H251 serves as a coordination point for Fe(3+). H251 is a Zn(2+) binding site. Residue E254 participates in 4-imidazolone-5-propanoate binding. D325 contributes to the Fe(3+) binding site. D325 lines the Zn(2+) pocket. Positions 327 and 329 each coordinate N-formimidoyl-L-glutamate. T330 contacts 4-imidazolone-5-propanoate.

The protein belongs to the metallo-dependent hydrolases superfamily. HutI family. Zn(2+) serves as cofactor. Fe(3+) is required as a cofactor.

The protein localises to the cytoplasm. The catalysed reaction is 4-imidazolone-5-propanoate + H2O = N-formimidoyl-L-glutamate. The protein operates within amino-acid degradation; L-histidine degradation into L-glutamate; N-formimidoyl-L-glutamate from L-histidine: step 3/3. Functionally, catalyzes the hydrolytic cleavage of the carbon-nitrogen bond in imidazolone-5-propanoate to yield N-formimidoyl-L-glutamate. It is the third step in the universal histidine degradation pathway. The protein is Imidazolonepropionase of Syntrophobacter fumaroxidans (strain DSM 10017 / MPOB).